A 257-amino-acid chain; its full sequence is GTP cyclohydrolase III (257 aa).

The protein belongs to the archaeal-type GTP cyclohydrolase family.

The catalysed reaction is GTP + 3 H2O = 2-amino-5-formylamino-6-(5-phospho-D-ribosylamino)pyrimidin-4(3H)-one + 2 phosphate + 2 H(+). In terms of biological role, catalyzes the formation of 2-amino-5-formylamino-6-ribofuranosylamino-4(3H)-pyrimidinone ribonucleotide monophosphate and inorganic phosphate from GTP. Also has an independent pyrophosphate phosphohydrolase activity. The polypeptide is GTP cyclohydrolase III (Halorubrum lacusprofundi (strain ATCC 49239 / DSM 5036 / JCM 8891 / ACAM 34)).